A 355-amino-acid polypeptide reads, in one-letter code: NADH-quinone oxidoreductase subunit H (355 aa).

8 helical membrane passes run 25-45 (IVRILVVAVVILLCVAYLILW), 91-111 (WLYLIAPVMTVVPAFAVWAVI), 126-146 (LLYAMAISSIGVYAVILAGWA), 170-190 (MGFALVLVLMTAGSLNLSEIV), 205-225 (FLSWNWLPLLPAFVVYFVSGI), 253-273 (MAFALFFLAEYINMIVISALA), 290-310 (FIPGVFWLVLKVFALLSVFIW), and 330-350 (VFLPVTVIWVVVVGFWMMSPL).

This sequence belongs to the complex I subunit 1 family. In terms of assembly, NDH-1 is composed of 14 different subunits. Subunits NuoA, H, J, K, L, M, N constitute the membrane sector of the complex.

It localises to the cell inner membrane. It carries out the reaction a quinone + NADH + 5 H(+)(in) = a quinol + NAD(+) + 4 H(+)(out). Functionally, NDH-1 shuttles electrons from NADH, via FMN and iron-sulfur (Fe-S) centers, to quinones in the respiratory chain. The immediate electron acceptor for the enzyme in this species is believed to be ubiquinone. Couples the redox reaction to proton translocation (for every two electrons transferred, four hydrogen ions are translocated across the cytoplasmic membrane), and thus conserves the redox energy in a proton gradient. This subunit may bind ubiquinone. In Burkholderia ambifaria (strain MC40-6), this protein is NADH-quinone oxidoreductase subunit H.